The primary structure comprises 131 residues: Small ribosomal subunit protein uS11 (131 aa).

This sequence belongs to the universal ribosomal protein uS11 family. In terms of assembly, part of the 30S ribosomal subunit. Interacts with proteins S7 and S18. Binds to IF-3.

Located on the platform of the 30S subunit, it bridges several disparate RNA helices of the 16S rRNA. Forms part of the Shine-Dalgarno cleft in the 70S ribosome. This Geobacter sulfurreducens (strain ATCC 51573 / DSM 12127 / PCA) protein is Small ribosomal subunit protein uS11.